The following is a 401-amino-acid chain: Argininosuccinate synthase (401 aa).

Position 9–17 (9–17 (AYSGGLDTS)) interacts with ATP. Y86 contacts L-citrulline. G116 is a binding site for ATP. Positions 118, 122, and 123 each coordinate L-aspartate. Residue N122 coordinates L-citrulline. L-citrulline-binding residues include R126, S174, S183, E259, and Y271.

The protein belongs to the argininosuccinate synthase family. Type 1 subfamily. In terms of assembly, homotetramer.

It is found in the cytoplasm. The enzyme catalyses L-citrulline + L-aspartate + ATP = 2-(N(omega)-L-arginino)succinate + AMP + diphosphate + H(+). It functions in the pathway amino-acid biosynthesis; L-arginine biosynthesis; L-arginine from L-ornithine and carbamoyl phosphate: step 2/3. The sequence is that of Argininosuccinate synthase from Bacillus mycoides (strain KBAB4) (Bacillus weihenstephanensis).